The chain runs to 356 residues: Terpene synthase 10 (356 aa).

Positions 90–95 match the DDxx(x)D/E motif motif; sequence DDYLDS. Residues 232–240 carry the NDxxSxxxD/E motif motif; sequence NDAVSYAKE.

The protein belongs to the terpene synthase family.

The enzyme catalyses geranylgeranyl diphosphate = beta-araneosene + diphosphate. Functionally, terpene synthase that converts its substrate farnesyl diphosphate (FPP) into several unidentified sesquiterpenes. TPS10 also converts geranylgeranyl diphosphate (GGPP) into the diterpene beta-araneosene. The polypeptide is Terpene synthase 10 (Dictyostelium purpureum (Slime mold)).